The following is a 417-amino-acid chain: mRNA export factor ICP27 homolog (417 aa).

Acidic residues predominate over residues 1–28 (MEDIIEGGISSDDDFDSSDSSSDEEESD). Positions 1–143 (MEDIIEGGIS…NGPLRNGPPR (143 aa)) are disordered. Residues 64-120 (RQRSPITWEHQSPLSRVYRSPSPMRFGKRPRISSNSTSRSCKTSWADRVREAAAQRR) form an interaction with RNA region. Positions 88 to 94 (RFGKRPR) match the Nuclear localization signal motif. A compositionally biased stretch (low complexity) spans 96-107 (SSNSTSRSCKTS). The tract at residues 106 to 120 (TSWADRVREAAAQRR) is interaction with host ALYREF or mouse ALYREF2. The segment covering 108–117 (WADRVREAAA) has biased composition (basic and acidic residues). Positions 118 to 127 (QRRPSRPFRK) match the Nuclear localization signal motif. Positions 120-130 (RPSRPFRKPYS) are enriched in basic residues. Residues 132-141 (PRNGPLRNGP) are compositionally biased toward low complexity. C295, H385, C389, and C394 together coordinate Zn(2+). The CHC2-type zinc-finger motif lies at 295–394 (CLMQTTPQDH…HLNKCPSSTC (100 aa)).

Belongs to the HHV-1 ICP27 protein family. In terms of assembly, homodimer. Homodimerization is required for transactivation. Interacts with host ALYREF and with mouse ALYREF2. Associates in a complex with RNA, and host export factors NXF1/TAP and ALYREF or ALYREF2; these interactions allow nuclear export of viral transcripts.

Its subcellular location is the host cytoplasm. It localises to the host nucleus. In terms of biological role, probably acts as a viral splicing factor that regulates viral RNA splicing. Functions as a multifunctional regulator of the expression of viral lytic genes. Early protein that promotes the accumulation and nuclear export of viral intronless RNA transcripts by interacting with mRNAs and cellular export proteins. The polypeptide is mRNA export factor ICP27 homolog (EJRF1) (Saimiriine herpesvirus 2 (strain 11) (SaHV-2)).